The sequence spans 879 residues: Alanine--tRNA ligase (879 aa).

4 residues coordinate Zn(2+): H567, H571, C669, and H673.

This sequence belongs to the class-II aminoacyl-tRNA synthetase family. Zn(2+) is required as a cofactor.

Its subcellular location is the cytoplasm. The enzyme catalyses tRNA(Ala) + L-alanine + ATP = L-alanyl-tRNA(Ala) + AMP + diphosphate. In terms of biological role, catalyzes the attachment of alanine to tRNA(Ala) in a two-step reaction: alanine is first activated by ATP to form Ala-AMP and then transferred to the acceptor end of tRNA(Ala). Also edits incorrectly charged Ser-tRNA(Ala) and Gly-tRNA(Ala) via its editing domain. This Levilactobacillus brevis (strain ATCC 367 / BCRC 12310 / CIP 105137 / JCM 1170 / LMG 11437 / NCIMB 947 / NCTC 947) (Lactobacillus brevis) protein is Alanine--tRNA ligase.